The sequence spans 349 residues: Cobalt-precorrin-5B C(1)-methyltransferase (349 aa).

The protein belongs to the CbiD family.

It carries out the reaction Co-precorrin-5B + S-adenosyl-L-methionine = Co-precorrin-6A + S-adenosyl-L-homocysteine. The protein operates within cofactor biosynthesis; adenosylcobalamin biosynthesis; cob(II)yrinate a,c-diamide from sirohydrochlorin (anaerobic route): step 6/10. Functionally, catalyzes the methylation of C-1 in cobalt-precorrin-5B to form cobalt-precorrin-6A. The sequence is that of Cobalt-precorrin-5B C(1)-methyltransferase from Saccharolobus islandicus (strain M.16.27) (Sulfolobus islandicus).